The sequence spans 184 residues: NADH-quinone oxidoreductase subunit B (184 aa).

[4Fe-4S] cluster contacts are provided by C63, C64, C128, and C158.

The protein belongs to the complex I 20 kDa subunit family. In terms of assembly, NDH-1 is composed of 14 different subunits. Subunits NuoB, C, D, E, F, and G constitute the peripheral sector of the complex. [4Fe-4S] cluster serves as cofactor.

The protein resides in the cell inner membrane. It catalyses the reaction a quinone + NADH + 5 H(+)(in) = a quinol + NAD(+) + 4 H(+)(out). In terms of biological role, NDH-1 shuttles electrons from NADH, via FMN and iron-sulfur (Fe-S) centers, to quinones in the respiratory chain. Couples the redox reaction to proton translocation (for every two electrons transferred, four hydrogen ions are translocated across the cytoplasmic membrane), and thus conserves the redox energy in a proton gradient. The sequence is that of NADH-quinone oxidoreductase subunit B from Xylella fastidiosa (strain 9a5c).